We begin with the raw amino-acid sequence, 252 residues long: Type III pantothenate kinase (252 aa).

Residue 6–13 (DIGNTNIV) coordinates ATP. A substrate-binding site is contributed by 107 to 110 (GADL). Catalysis depends on Asp-109, which acts as the Proton acceptor. K(+) is bound at residue Asp-129. Thr-132 lines the ATP pocket. Residue Thr-184 coordinates substrate.

The protein belongs to the type III pantothenate kinase family. As to quaternary structure, homodimer. It depends on NH4(+) as a cofactor. K(+) is required as a cofactor.

Its subcellular location is the cytoplasm. It catalyses the reaction (R)-pantothenate + ATP = (R)-4'-phosphopantothenate + ADP + H(+). Its pathway is cofactor biosynthesis; coenzyme A biosynthesis; CoA from (R)-pantothenate: step 1/5. In terms of biological role, catalyzes the phosphorylation of pantothenate (Pan), the first step in CoA biosynthesis. This chain is Type III pantothenate kinase, found in Bifidobacterium animalis subsp. lactis (strain AD011).